A 244-amino-acid chain; its full sequence is Carbonic anhydrase (244 aa).

Positions 1 to 19 are cleaved as a signal peptide; sequence MKGKLSIALMLSVCFSASA. Residues 23-244 form the Alpha-carbonic anhydrase domain; the sequence is VHWGYEGNGD…QPLNGRIIIH (222 aa). Cysteine 46 and cysteine 199 are disulfide-bonded. Histidine 84 serves as the catalytic Proton acceptor. Residues histidine 109, histidine 111, and histidine 128 each contribute to the Zn(2+) site. 195-196 contacts substrate; sequence TT.

It belongs to the alpha-carbonic anhydrase family. It depends on Zn(2+) as a cofactor.

The protein resides in the periplasm. It catalyses the reaction hydrogencarbonate + H(+) = CO2 + H2O. Functionally, reversible hydration of carbon dioxide. This is Carbonic anhydrase (cah) from Pectobacterium carotovorum (Erwinia carotovora).